The primary structure comprises 359 residues: DNA replication and repair protein RecF (359 aa).

30–37 (GNNGSGKT) provides a ligand contact to ATP.

This sequence belongs to the RecF family.

It localises to the cytoplasm. Functionally, the RecF protein is involved in DNA metabolism; it is required for DNA replication and normal SOS inducibility. RecF binds preferentially to single-stranded, linear DNA. It also seems to bind ATP. This Haemophilus influenzae (strain 86-028NP) protein is DNA replication and repair protein RecF.